The primary structure comprises 229 residues: Uracil-DNA glycosylase (229 aa).

D70 acts as the Proton acceptor in catalysis.

It belongs to the uracil-DNA glycosylase (UDG) superfamily. UNG family.

It is found in the cytoplasm. It catalyses the reaction Hydrolyzes single-stranded DNA or mismatched double-stranded DNA and polynucleotides, releasing free uracil.. In terms of biological role, excises uracil residues from the DNA which can arise as a result of misincorporation of dUMP residues by DNA polymerase or due to deamination of cytosine. The polypeptide is Uracil-DNA glycosylase (Chlamydia abortus (strain DSM 27085 / S26/3) (Chlamydophila abortus)).